Here is a 20-residue protein sequence, read N- to C-terminus: Chemoheterotroph-specific protein (20 aa).

The chain is Chemoheterotroph-specific protein from Thiomonas delicata (Thiomonas cuprina).